We begin with the raw amino-acid sequence, 352 residues long: Ion-translocating oxidoreductase complex subunit D (352 aa).

A run of 5 helical transmembrane segments spans residues 20-40, 42-62, 78-109, 123-143, and 148-168; these read IMLL…WFFG, GTLV…ALVL, ALLT…VIIA, PAMI…TSWL, and IAVN…GHTA. The residue at position 187 (T187) is an FMN phosphoryl threonine. The next 5 helical transmembrane spans lie at 214 to 234, 242 to 262, 267 to 287, 301 to 321, and 322 to 342; these read ILAG…GVWL, WHIP…GWLF, LAAP…FFIL, LIFG…GGYP, and DGVA…DYYT.

Belongs to the NqrB/RnfD family. As to quaternary structure, the complex is composed of six subunits: RsxA, RsxB, RsxC, RsxD, RsxE and RsxG. The cofactor is FMN.

It is found in the cell inner membrane. Part of a membrane-bound complex that couples electron transfer with translocation of ions across the membrane. Required to maintain the reduced state of SoxR. This Escherichia coli O139:H28 (strain E24377A / ETEC) protein is Ion-translocating oxidoreductase complex subunit D.